Here is a 183-residue protein sequence, read N- to C-terminus: Putative manganese efflux pump MntP 1 (183 aa).

The next 6 helical transmembrane spans lie at 6-26 (LFLLALAISLDAFGVILCIGI), 36-56 (IIFVFSFGFFQFFLSFLGGYI), 64-84 (IVPIPTIVGGLIIIIVGILMI), 100-120 (IMYLILGVSVSIDALVIGFTT), 130-150 (LFMSSLFMGLIATIICSLGII), and 158-178 (ISIISSYADYIGGIILILFGL).

The protein belongs to the MntP (TC 9.B.29) family.

Its subcellular location is the cell membrane. Probably functions as a manganese efflux pump. The chain is Putative manganese efflux pump MntP 1 from Clostridium botulinum (strain Langeland / NCTC 10281 / Type F).